Reading from the N-terminus, the 306-residue chain is MTNEFLHFDRISRERWQQLHRKTTPPLTEEELNSIKSFNDEISLQDVMDIYLPLTNLIQIYKRAKEDLAFSKGIFLQKTLKKQPFIIGVSGSVAVGKSTTSRLLQILLSRTFENAKVELVTTDGFLYPNSVLQEHDLLNRKGFPESYNMELLLNFLDHLKNGQNYQVPVYSHEIYDIVPDQTQTIQVADFVIVEGINVFQNPQNERLYITDFFDFSIYVDAEVENIEKWYLDRFGKLLDLARRDSKNYYHRFTKEPVEDIMKMARNIWKSINLVNLKDYIEPTRNRAELILHKAHNHEIDEIYLKK.

An ATP-binding site is contributed by G91–S98.

It belongs to the prokaryotic pantothenate kinase family.

Its subcellular location is the cytoplasm. It carries out the reaction (R)-pantothenate + ATP = (R)-4'-phosphopantothenate + ADP + H(+). It functions in the pathway cofactor biosynthesis; coenzyme A biosynthesis; CoA from (R)-pantothenate: step 1/5. In Streptococcus gordonii (strain Challis / ATCC 35105 / BCRC 15272 / CH1 / DL1 / V288), this protein is Pantothenate kinase.